We begin with the raw amino-acid sequence, 537 residues long: Protein ST7 homolog (537 aa).

A helical membrane pass occupies residues 15–35 (FYVALTGTSSLISGLILIFEW). The tract at residues 61 to 111 (SDGQSESSNGSGSSSSSGSSSSSNGGAGGGGSGGAGASGSGSATTSTGTQM) is disordered. The segment covering 67 to 84 (SSNGSGSSSSSGSSSSSN) has biased composition (low complexity). Gly residues predominate over residues 85 to 99 (GGAGGGGSGGAGASG). Positions 100-109 (SGSATTSTGT) are enriched in low complexity. Residues 472 to 492 (LPFFILFTAGLCSITALLALA) form a helical membrane-spanning segment.

The protein belongs to the ST7 family.

It localises to the membrane. This is Protein ST7 homolog from Drosophila melanogaster (Fruit fly).